We begin with the raw amino-acid sequence, 369 residues long: MASYRYRAPTRYINADVSVDNLLRTIDSMSRQCRSRNETESELARVRSIITLYRPHLQNRVDLQVAELVLEALMPPNGAQEITHNFNYKYDYNTNSGGGAPPPFFPVGPARPTDAFGAPIAPSEPTPASAPSPPKADAPNPIQQNVYINSAGEAARPSSPRPPPPPASGGGAVALMQVDDADELALKNDYDTLTREYTLVSYKRLVRTLVPVSQKYIINDLFVRGLAKLCSVELLLNNDLGALVDCINREAALNIRPDTPDLCRLLVAMIRGFFILASSATRQEYTLARCDSAALVEEEVWSVKTALDQRMSRLADELETARDKLTQTASRLNRAELELRESRETTLMLKRQVEMNEALRRPARFDDEL.

The span at Ala-110–Ala-121 shows a compositional bias: low complexity. Residues Ala-110 to Ala-172 form a disordered region. The span at Pro-122–Ala-136 shows a compositional bias: pro residues.

This is an uncharacterized protein from Lymantria dispar multicapsid nuclear polyhedrosis virus (LdMNPV).